A 314-amino-acid chain; its full sequence is Mitochondrial 2-oxoglutarate/malate carrier protein (314 aa).

A2 carries the post-translational modification N-acetylalanine. The residue at position 6 (S6) is a Phosphoserine. 3 Solcar repeats span residues 23–108 (VKFL…LFER), 117–208 (PGFL…SKQF), and 217–306 (DNIL…MNKA). A helical transmembrane segment spans residues 24-42 (KFLFGGLAGMGATVFVQPL). K57 bears the N6-succinyllysine mark. K73 is subject to N6-acetyllysine. A helical membrane pass occupies residues 83–101 (GLSAGLLRQATYTTTRLGI). Y102 carries the phosphotyrosine modification. A run of 3 helical transmembrane segments spans residues 119 to 140 (FLLK…GTPA), 183 to 202 (GCIP…LASY), and 222 to 240 (HFCA…SMPV). K256 carries the post-translational modification N6-acetyllysine. Residues 281–300 (GFTPYYARLGPHTVLTFIFL) form a helical membrane-spanning segment.

It belongs to the mitochondrial carrier (TC 2.A.29) family. As to quaternary structure, interacts with SMIM26. As to expression, most highly expressed in the heart.

It localises to the mitochondrion inner membrane. It carries out the reaction (S)-malate(in) + 2-oxoglutarate(out) = (S)-malate(out) + 2-oxoglutarate(in). The enzyme catalyses malonate(in) + 2-oxoglutarate(out) = malonate(out) + 2-oxoglutarate(in). It catalyses the reaction succinate(in) + 2-oxoglutarate(out) = succinate(out) + 2-oxoglutarate(in). The catalysed reaction is maleate(in) + 2-oxoglutarate(out) = maleate(out) + 2-oxoglutarate(in). It carries out the reaction oxaloacetate(in) + 2-oxoglutarate(out) = oxaloacetate(out) + 2-oxoglutarate(in). Its function is as follows. Catalyzes the transport of 2-oxoglutarate (alpha-oxoglutarate) across the inner mitochondrial membrane in an electroneutral exchange for malate. Can also exchange 2-oxoglutarate for other dicarboxylic acids such as malonate, succinate, maleate and oxaloacetate, although with lower affinity. Contributes to several metabolic processes, including the malate-aspartate shuttle, the oxoglutarate/isocitrate shuttle, in gluconeogenesis from lactate, and in nitrogen metabolism. Maintains mitochondrial fusion and fission events, and the organization and morphology of cristae. Involved in the regulation of apoptosis. Helps protect from cytotoxic-induced apoptosis by modulating glutathione levels in mitochondria. This is Mitochondrial 2-oxoglutarate/malate carrier protein (SLC25A11) from Homo sapiens (Human).